The primary structure comprises 366 residues: Fe-S cluster assembly protein DRE2 (366 aa).

The interval 8 to 167 is N-terminal SAM-like domain; that stretch reads AQGSGRFLLL…KPDFGAQQAV (160 aa). The disordered stretch occupies residues 100 to 136; that stretch reads RNRDNQIWGSGSDSAAGLGSSDGGGGGGGGEKKSSSE. Residues 108–118 are compositionally biased toward low complexity; that stretch reads GSGSDSAAGLG. Residues 119–128 are compositionally biased toward gly residues; sequence SSDGGGGGGG. The linker stretch occupies residues 168 to 258; sequence PLKLGRKKNL…EEELLGEFDM (91 aa). Residues Cys-268, Cys-279, Cys-282, and Cys-284 each contribute to the [2Fe-2S] cluster site. Residues 268–284 are fe-S binding site A; sequence CRPKAGKRRRACKDCTC. Residues Cys-329, Cys-332, Cys-340, and Cys-343 each contribute to the [4Fe-4S] cluster site. Short sequence motifs (cx2C motif) lie at residues 329-332 and 340-343; these read CGNC and CDGC. A fe-S binding site B region spans residues 329-343; that stretch reads CGNCALGDAFRCDGC.

Belongs to the anamorsin family. Monomer. Interacts with TAH18. Interacts with MIA40. Requires [2Fe-2S] cluster as cofactor. It depends on [4Fe-4S] cluster as a cofactor.

The protein resides in the cytoplasm. It localises to the mitochondrion intermembrane space. Component of the cytosolic iron-sulfur (Fe-S) protein assembly (CIA) machinery required for the maturation of extramitochondrial Fe-S proteins. Part of an electron transfer chain functioning in an early step of cytosolic Fe-S biogenesis, facilitating the de novo assembly of a [4Fe-4S] cluster on the scaffold complex CFD1-NBP35. Electrons are transferred to DRE2 from NADPH via the FAD- and FMN-containing protein TAH18. TAH18-DRE2 are also required for the assembly of the diferric tyrosyl radical cofactor of ribonucleotide reductase (RNR), probably by providing electrons for reduction during radical cofactor maturation in the catalytic small subunit RNR2. This chain is Fe-S cluster assembly protein DRE2, found in Paracoccidioides lutzii (strain ATCC MYA-826 / Pb01) (Paracoccidioides brasiliensis).